The chain runs to 97 residues: Aspartyl/glutamyl-tRNA(Asn/Gln) amidotransferase subunit C (97 aa).

Belongs to the GatC family. Heterotrimer of A, B and C subunits.

The enzyme catalyses L-glutamyl-tRNA(Gln) + L-glutamine + ATP + H2O = L-glutaminyl-tRNA(Gln) + L-glutamate + ADP + phosphate + H(+). It carries out the reaction L-aspartyl-tRNA(Asn) + L-glutamine + ATP + H2O = L-asparaginyl-tRNA(Asn) + L-glutamate + ADP + phosphate + 2 H(+). Allows the formation of correctly charged Asn-tRNA(Asn) or Gln-tRNA(Gln) through the transamidation of misacylated Asp-tRNA(Asn) or Glu-tRNA(Gln) in organisms which lack either or both of asparaginyl-tRNA or glutaminyl-tRNA synthetases. The reaction takes place in the presence of glutamine and ATP through an activated phospho-Asp-tRNA(Asn) or phospho-Glu-tRNA(Gln). This Anaeromyxobacter dehalogenans (strain 2CP-C) protein is Aspartyl/glutamyl-tRNA(Asn/Gln) amidotransferase subunit C.